We begin with the raw amino-acid sequence, 303 residues long: Aspartate carbamoyltransferase catalytic subunit (303 aa).

Carbamoyl phosphate is bound by residues Arg-51 and Thr-52. Lys-80 lines the L-aspartate pocket. Positions 101, 129, and 132 each coordinate carbamoyl phosphate. L-aspartate is bound by residues Arg-162 and Arg-221. 2 residues coordinate carbamoyl phosphate: Leu-260 and Pro-261.

The protein belongs to the aspartate/ornithine carbamoyltransferase superfamily. ATCase family. Heterooligomer of catalytic and regulatory chains.

The enzyme catalyses carbamoyl phosphate + L-aspartate = N-carbamoyl-L-aspartate + phosphate + H(+). Its pathway is pyrimidine metabolism; UMP biosynthesis via de novo pathway; (S)-dihydroorotate from bicarbonate: step 2/3. Its function is as follows. Catalyzes the condensation of carbamoyl phosphate and aspartate to form carbamoyl aspartate and inorganic phosphate, the committed step in the de novo pyrimidine nucleotide biosynthesis pathway. The polypeptide is Aspartate carbamoyltransferase catalytic subunit (Saccharolobus islandicus (strain M.16.27) (Sulfolobus islandicus)).